Here is a 414-residue protein sequence, read N- to C-terminus: Patatin-like protein 1 (414 aa).

The PNPLA domain occupies 20–224 (LAIDGGGIRG…AANNPTMVAM (205 aa)). Positions 24 to 29 (GGGIRG) match the GXGXXG motif. Residues 62-66 (GTSTG) carry the GXSXG motif. Serine 64 functions as the Nucleophile in the catalytic mechanism. Catalysis depends on aspartate 211, which acts as the Proton acceptor. Positions 211–213 (DGG) match the DGA/G motif.

This sequence belongs to the patatin family.

Possesses non-specific lipolytic acyl hydrolase (LAH) activity. Hydrolyzes phospholipids as well as galactolipids. May play a role in disease resistance. The sequence is that of Patatin-like protein 1 (PLP1) from Oryza sativa subsp. indica (Rice).